We begin with the raw amino-acid sequence, 264 residues long: S-adenosylmethionine decarboxylase proenzyme (264 aa).

Ser-112 (schiff-base intermediate with substrate; via pyruvic acid) is an active-site residue. Position 112 is a pyruvic acid (Ser); by autocatalysis (Ser-112). His-117 (proton acceptor; for processing activity) is an active-site residue. Cys-140 functions as the Proton donor; for catalytic activity in the catalytic mechanism.

Belongs to the prokaryotic AdoMetDC family. Type 2 subfamily. Heterooctamer of four alpha and four beta chains arranged as a tetramer of alpha/beta heterodimers. Requires pyruvate as cofactor. Is synthesized initially as an inactive proenzyme. Formation of the active enzyme involves a self-maturation process in which the active site pyruvoyl group is generated from an internal serine residue via an autocatalytic post-translational modification. Two non-identical subunits are generated from the proenzyme in this reaction, and the pyruvate is formed at the N-terminus of the alpha chain, which is derived from the carboxyl end of the proenzyme. The post-translation cleavage follows an unusual pathway, termed non-hydrolytic serinolysis, in which the side chain hydroxyl group of the serine supplies its oxygen atom to form the C-terminus of the beta chain, while the remainder of the serine residue undergoes an oxidative deamination to produce ammonia and the pyruvoyl group blocking the N-terminus of the alpha chain.

The enzyme catalyses S-adenosyl-L-methionine + H(+) = S-adenosyl 3-(methylsulfanyl)propylamine + CO2. It participates in amine and polyamine biosynthesis; S-adenosylmethioninamine biosynthesis; S-adenosylmethioninamine from S-adenosyl-L-methionine: step 1/1. Its function is as follows. Catalyzes the decarboxylation of S-adenosylmethionine to S-adenosylmethioninamine (dcAdoMet), the propylamine donor required for the synthesis of the polyamines spermine and spermidine from the diamine putrescine. In Klebsiella pneumoniae (strain 342), this protein is S-adenosylmethionine decarboxylase proenzyme.